Reading from the N-terminus, the 313-residue chain is tRNA-cytidine(32) 2-sulfurtransferase (313 aa).

A PP-loop motif motif is present at residues 50 to 55 (SGGKDS). 3 residues coordinate [4Fe-4S] cluster: Cys125, Cys128, and Cys216.

The protein belongs to the TtcA family. As to quaternary structure, homodimer. It depends on Mg(2+) as a cofactor. The cofactor is [4Fe-4S] cluster.

The protein resides in the cytoplasm. It carries out the reaction cytidine(32) in tRNA + S-sulfanyl-L-cysteinyl-[cysteine desulfurase] + AH2 + ATP = 2-thiocytidine(32) in tRNA + L-cysteinyl-[cysteine desulfurase] + A + AMP + diphosphate + H(+). It participates in tRNA modification. Its function is as follows. Catalyzes the ATP-dependent 2-thiolation of cytidine in position 32 of tRNA, to form 2-thiocytidine (s(2)C32). The sulfur atoms are provided by the cysteine/cysteine desulfurase (IscS) system. The sequence is that of tRNA-cytidine(32) 2-sulfurtransferase from Haemophilus influenzae (strain ATCC 51907 / DSM 11121 / KW20 / Rd).